The chain runs to 728 residues: Ophiobolin F synthase oblA (728 aa).

The interval 1–322 (MEYKYSTIVD…RYHFPGRWNE (322 aa)) is (7Z)-ophiobola-7,19-dien-3-ol synthase. 2 residues coordinate Mg(2+): aspartate 93 and aspartate 97. Aspartate 93 is a substrate binding site. Positions 93–97 (DDEID) match the DDXXD 1 motif. Residues 182–185 (RCMD), asparagine 226, 230–234 (SYEKE), and 313–314 (RY) contribute to the substrate site. The short motif at 226-234 (NDLFSYEKE) is the NSE/DTE element. The interval 323–728 (LQKLRAEHGI…LRLMVDMLKV (406 aa)) is geranylfarnesyl diphosphate synthase. A compositionally biased stretch (low complexity) spans 362-371 (GINGTNGVNG). The interval 362 to 394 (GINGTNGVNGKRNRDEDGDENDARINGNGFKKP) is disordered. Positions 439, 442, and 471 each coordinate isopentenyl diphosphate. Mg(2+) is bound by residues aspartate 478 and aspartate 482. The short motif at 478–482 (DDIED) is the DDXXD 2 element. Arginine 487 lines the dimethylallyl diphosphate pocket. Arginine 488 contacts isopentenyl diphosphate. Dimethylallyl diphosphate contacts are provided by lysine 565, threonine 566, glutamine 604, asparagine 611, lysine 621, and lysine 631.

In the N-terminal section; belongs to the terpene synthase family. This sequence in the C-terminal section; belongs to the FPP/GGPP synthase family. Requires Mg(2+) as cofactor.

It carries out the reaction isopentenyl diphosphate + (2E,6E)-farnesyl diphosphate = (2E,6E,10E)-geranylgeranyl diphosphate + diphosphate. The catalysed reaction is isopentenyl diphosphate + (2E,6E,10E)-geranylgeranyl diphosphate = (2E,6E,10E,14E)-geranylfarnesyl diphosphate + diphosphate. It catalyses the reaction (2E,6E,10E,14E)-geranylfarnesyl diphosphate + H2O = ophiobolin F + diphosphate. It functions in the pathway secondary metabolite biosynthesis; terpenoid biosynthesis. Bifunctional sesterterpene synthase; part of the gene cluster that mediates the biosynthesis of the sesterterpenes ophiobolins, fungal phytotoxins with potential anti-cancer activities. The first step of the pathway is performed by the sesterterpene synthase oblA that possesses both prenyl transferase and terpene cyclase activity, converting isopentenyl diphosphate and dimethylallyl diphosphate into geranylfarnesyl diphosphate (GFPP) and further converting GFPP into ophiobolin F, respectively. Other sesterterpenoids (C(25) terpenoids) are found as minor products of oblA. The cytochrome P450 monooxygenase oblB then catalyzes a four-step oxidative transformation of ophiobolin F to yield ophiobolin C. The function of the cytochrome P450 monooxygenase oblE has still to be determined. This chain is Ophiobolin F synthase oblA, found in Emericella variicolor (Aspergillus stellatus).